Reading from the N-terminus, the 163-residue chain is Transcriptional repressor NrdR (163 aa).

The segment at 3–34 is a zinc-finger region; the sequence is CPKCNYLKSSVVDSRQAEEGNTIRRRRECENC. Residues 49–139 enclose the ATP-cone domain; sequence LLVVKKDGTR…VYRSFKDVDE (91 aa).

The protein belongs to the NrdR family. The cofactor is Zn(2+).

In terms of biological role, negatively regulates transcription of bacterial ribonucleotide reductase nrd genes and operons by binding to NrdR-boxes. In Streptococcus mutans serotype c (strain ATCC 700610 / UA159), this protein is Transcriptional repressor NrdR.